Here is a 764-residue protein sequence, read N- to C-terminus: Thyrotropin receptor (764 aa).

Residues 1–21 (MRPTPLLRLALLLVLPSSLWG) form the signal peptide. The Extracellular segment spans residues 22–413 (ERCPSPPCEC…EFNPCEDIMG (392 aa)). Cysteines 31 and 41 form a disulfide. An LRR 1 repeat occupies 51-74 (PPSTQTLKFIETHLKTIPSRAFSN). 2 N-linked (GlcNAc...) asparagine glycosylation sites follow: Asn-77 and Asn-99. 5 LRR repeats span residues 125 to 150 (LPLL…IYST), 152 to 174 (VFFI…AFQG), 176 to 199 (SNET…AFNG), 201 to 223 (KLDA…AFAG), and 225 to 248 (YSGP…GLEH). Residues Asn-177 and Asn-198 are each glycosylated (N-linked (GlcNAc...) asparagine). Asn-302 carries N-linked (GlcNAc...) asparagine glycosylation. The residue at position 385 (Tyr-385) is a Sulfotyrosine. The helical transmembrane segment at 414–441 (YKFLRIVVWFVSLLALLGNVFVLVILLT) threads the bilayer. Topologically, residues 442–450 (SHYKLTVPR) are cytoplasmic. The helical transmembrane segment at 451–473 (FLMCNLAFADFCMGLYLLLIASV) threads the bilayer. Residues 474–494 (DLYTQSEYYNHAIDWQTGPGC) are Extracellular-facing. Cys-494 and Cys-569 are oxidised to a cystine. A helical membrane pass occupies residues 495–517 (NTAGFFTVFASELSVYTLTVITL). The Cytoplasmic segment spans residues 518–537 (ERWYAITFAMHLDRKIRLWH). A helical membrane pass occupies residues 538-560 (AYVIMLGGWVCCFLLALLPLVGI). The Extracellular portion of the chain corresponds to 561-580 (SSYAKVSICLPMDTETPLAL). The helical transmembrane segment at 581–602 (AYIILVLLLNIIAFIIVCACYV) threads the bilayer. The Cytoplasmic segment spans residues 603–625 (KIYITVRNPHYNPGDKDTRIAKR). The helical transmembrane segment at 626 to 649 (MAVLIFTDFMCMAPISFYALSALM) threads the bilayer. The Extracellular segment spans residues 650-660 (NKPLITVTNSK). A helical membrane pass occupies residues 661–682 (ILLVLFYPLNSCANPFLYAIFT). Topologically, residues 683–764 (KAFQRDVFML…TSKEYKQTVL (82 aa)) are cytoplasmic. A PDZ-binding motif is present at residues 762 to 764 (TVL).

The protein belongs to the G-protein coupled receptor 1 family. FSH/LSH/TSH subfamily. In terms of assembly, interacts with heterodimer GPHA2:GPHB5; this interaction stimulates cAMP production. Interacts (via the PDZ-binding motif) with SCRIB; regulates TSHR trafficking and function. Post-translationally, glycosylated. Sulfated. Sulfation on Tyr-385 plays a role in thyrotropin receptor binding and activation.

Its subcellular location is the cell membrane. It localises to the basolateral cell membrane. Its function is as follows. Receptor for the thyroid-stimulating hormone (TSH) or thyrotropin. Also acts as a receptor for the heterodimeric glycoprotein hormone (GPHA2:GPHB5) or thyrostimulin. The activity of this receptor is mediated by G proteins which activate adenylate cyclase. Plays a central role in controlling thyroid cell metabolism. In Ovis aries (Sheep), this protein is Thyrotropin receptor (TSHR).